The following is a 674-amino-acid chain: uncharacterized protein (674 aa).

A signal peptide spans 1-24 (MKTLKALKIFIIVYISSVSLESFA). 2 helical membrane passes run 226-246 (IIGA…ALNK) and 254-274 (ITLF…LEPL). The disordered stretch occupies residues 363 to 384 (GNGPGGNNKPIPNFDPDSKKDR). The next 4 membrane-spanning stretches (helical) occupy residues 409–429 (IIIL…LLYF), 436–456 (CMIT…MVLF), 469–489 (VCIS…LLIT), and 562–582 (VVSI…FYYF). The interval 624-674 (SSVHAQGKSPVEDKPDIGSKRKDGVQQGEDSENSSGGELADLASGSGGGKL) is disordered. The span at 633–647 (PVEDKPDIGSKRKDG) shows a compositional bias: basic and acidic residues.

The protein belongs to the TrbL/VirB6 family.

The protein localises to the cell membrane. This is an uncharacterized protein from Rickettsia typhi (strain ATCC VR-144 / Wilmington).